The sequence spans 508 residues: Photosystem II CP47 reaction center protein (508 aa).

Transmembrane regions (helical) follow at residues 21–36, 101–115, 140–156, 203–218, 237–252, and 457–472; these read SVHIMHTALVSGWAGS, IMLSGLCFLAAIWHW, GIHLFLAGVACFGFGAF, IAAGTLGILAGLFHLS, VLSSSIAAVFFAAFVV, and SFALLFFFGHIWHGAR.

This sequence belongs to the PsbB/PsbC family. PsbB subfamily. As to quaternary structure, PSII is composed of 1 copy each of membrane proteins PsbA, PsbB, PsbC, PsbD, PsbE, PsbF, PsbH, PsbI, PsbJ, PsbK, PsbL, PsbM, PsbT, PsbX, PsbY, PsbZ, Psb30/Ycf12, at least 3 peripheral proteins of the oxygen-evolving complex and a large number of cofactors. It forms dimeric complexes. It depends on Binds multiple chlorophylls. PSII binds additional chlorophylls, carotenoids and specific lipids. as a cofactor.

It is found in the plastid. The protein localises to the chloroplast thylakoid membrane. Its function is as follows. One of the components of the core complex of photosystem II (PSII). It binds chlorophyll and helps catalyze the primary light-induced photochemical processes of PSII. PSII is a light-driven water:plastoquinone oxidoreductase, using light energy to abstract electrons from H(2)O, generating O(2) and a proton gradient subsequently used for ATP formation. The chain is Photosystem II CP47 reaction center protein from Piper cenocladum (Ant piper).